Consider the following 316-residue polypeptide: Porphobilinogen deaminase (316 aa).

S-(dipyrrolylmethanemethyl)cysteine is present on Cys-242.

This sequence belongs to the HMBS family. In terms of assembly, monomer. Dipyrromethane is required as a cofactor.

The enzyme catalyses 4 porphobilinogen + H2O = hydroxymethylbilane + 4 NH4(+). The protein operates within porphyrin-containing compound metabolism; protoporphyrin-IX biosynthesis; coproporphyrinogen-III from 5-aminolevulinate: step 2/4. In terms of biological role, tetrapolymerization of the monopyrrole PBG into the hydroxymethylbilane pre-uroporphyrinogen in several discrete steps. The protein is Porphobilinogen deaminase of Thioalkalivibrio sulfidiphilus (strain HL-EbGR7).